The sequence spans 390 residues: MFFSRKIRSLLLTPKRRWSLILTLCLIFTGINFSTSNDVQASRIKDIAQLHGVRSNQLIGYGLITGLNGTGDDMKKSAFTLQAIYNMMTRSGITLNPSEMKSIKIKNVAAVMVTASLPPFASSGSKIDIQVSSMGDAKSLAGGTLLMTPLKGVDNRVYAIAQGPLAIGAFSFGGKSAQAQKNHPNAGRIPDGATVEDTVLVDIGADGTLTYQLANADFTTANNMTRAINKKFGKDTAYPLDSGSVTINIPPHFSKRVVQFVANVESIDITADSVARVVVNERTGTVVMGQNVRLSTVAVSHGNLNLIIRESFDVSQPAPLADGETVITPSTEISVTEEEGQLVVLNMKNDVSIGEIANALNAIGATPRDLIAIFQAIKAAGAMHGELIVL.

An N-terminal signal peptide occupies residues 1–36 (MFFSRKIRSLLLTPKRRWSLILTLCLIFTGINFSTS).

The protein belongs to the FlgI family. In terms of assembly, the basal body constitutes a major portion of the flagellar organelle and consists of four rings (L,P,S, and M) mounted on a central rod.

The protein resides in the periplasm. The protein localises to the bacterial flagellum basal body. Assembles around the rod to form the L-ring and probably protects the motor/basal body from shearing forces during rotation. The sequence is that of Flagellar P-ring protein from Desulfotalea psychrophila (strain LSv54 / DSM 12343).